Here is a 70-residue protein sequence, read N- to C-terminus: Enhancer of split m6 protein (70 aa).

This chain is Enhancer of split m6 protein, found in Drosophila melanogaster (Fruit fly).